Reading from the N-terminus, the 113-residue chain is T cell receptor alpha variable 5 (113 aa).

The N-terminal stretch at 1-22 (MKTFAGFSFLFLWLQLDCMSRG) is a signal peptide. The region spanning 23 to 113 (EDVEQSLFLS…DSAIYFCAES (91 aa)) is the Ig-like domain. Asn42 carries N-linked (GlcNAc...) asparagine glycosylation. A disulfide bridge connects residues Cys43 and Cys110.

In terms of assembly, alpha-beta TR is a heterodimer composed of an alpha and beta chain; disulfide-linked. The alpha-beta TR is associated with the transmembrane signaling CD3 coreceptor proteins to form the TR-CD3 (TcR or TCR). The assembly of alpha-beta TR heterodimers with CD3 occurs in the endoplasmic reticulum where a single alpha-beta TR heterodimer associates with one CD3D-CD3E heterodimer, one CD3G-CD3E heterodimer and one CD247 homodimer forming a stable octameric structure. CD3D-CD3E and CD3G-CD3E heterodimers preferentially associate with TR alpha and TR beta chains, respectively. The association of the CD247 homodimer is the last step of TcR assembly in the endoplasmic reticulum and is required for transport to the cell surface.

The protein localises to the cell membrane. In terms of biological role, v region of the variable domain of T cell receptor (TR) alpha chain that participates in the antigen recognition. Alpha-beta T cell receptors are antigen specific receptors which are essential to the immune response and are present on the cell surface of T lymphocytes. Recognize peptide-major histocompatibility (MH) (pMH) complexes that are displayed by antigen presenting cells (APC), a prerequisite for efficient T cell adaptive immunity against pathogens. Binding of alpha-beta TR to pMH complex initiates TR-CD3 clustering on the cell surface and intracellular activation of LCK that phosphorylates the ITAM motifs of CD3G, CD3D, CD3E and CD247 enabling the recruitment of ZAP70. In turn ZAP70 phosphorylates LAT, which recruits numerous signaling molecules to form the LAT signalosome. The LAT signalosome propagates signal branching to three major signaling pathways, the calcium, the mitogen-activated protein kinase (MAPK) kinase and the nuclear factor NF-kappa-B (NF-kB) pathways, leading to the mobilization of transcription factors that are critical for gene expression and essential for T cell growth and differentiation. The T cell repertoire is generated in the thymus, by V-(D)-J rearrangement. This repertoire is then shaped by intrathymic selection events to generate a peripheral T cell pool of self-MH restricted, non-autoaggressive T cells. Post-thymic interaction of alpha-beta TR with the pMH complexes shapes TR structural and functional avidity. This chain is T cell receptor alpha variable 5, found in Homo sapiens (Human).